A 248-amino-acid polypeptide reads, in one-letter code: PF03932 family protein CutC (248 aa).

Belongs to the CutC family. In terms of assembly, homodimer.

It localises to the cytoplasm. This Escherichia coli (strain 55989 / EAEC) protein is PF03932 family protein CutC.